Consider the following 238-residue polypeptide: 15,16-dihydrobiliverdin:ferredoxin oxidoreductase (238 aa).

Belongs to the HY2 family.

The catalysed reaction is 15,16-dihydrobiliverdin + oxidized 2[4Fe-4S]-[ferredoxin] = biliverdin IXalpha + reduced 2[4Fe-4S]-[ferredoxin] + 2 H(+). Its function is as follows. Catalyzes the two-electron reduction of biliverdin IX-alpha at the C15 methine bridge. The polypeptide is 15,16-dihydrobiliverdin:ferredoxin oxidoreductase (Prochlorococcus marinus (strain MIT 9211)).